The chain runs to 381 residues: Chitin deacetylase 8 (381 aa).

The N-terminal stretch at 1–18 is a signal peptide; that stretch reads MKRLSVLCSLLLVAAALG. Cystine bridges form between C27-C39 and C32-C37. 3 residues coordinate Zn(2+): D63, H117, and H121. Intrachain disulfides connect C86–C335, C211–C216, C240–C246, C343–C365, and C348–C368. A glycan (N-linked (GlcNAc...) asparagine) is linked at N171.

Belongs to the carbohydrate esterase 4 (CE4) family. Zn(2+) serves as cofactor. Strongly expressed in the midgut. Has little or no expression in other tissues tested.

It localises to the secreted. The catalysed reaction is [(1-&gt;4)-N-acetyl-beta-D-glucosaminyl](n) + n H2O = chitosan + n acetate. Functionally, hydrolyzes the N-acetamido groups of N-acetyl-D-glucosamine (GlcNAc) residues in chitin. Shows activity towards the chitinous oligomers GlcNAc(3), GlcNAc(4), GlcNAc(5) and GlcNAc(6), but not GlcNAc or GlcNAc(2). Requires the substrate to occupy subsites 0, +1, and +2 for optimum catalysis. This is Chitin deacetylase 8 from Bombyx mori (Silk moth).